The chain runs to 63 residues: UPF0337 protein PSPTO_1596 (63 aa).

Residues 20–63 (KQAVGKATDNTKLQAEGKAQELKGEGQQAKGEVKDAVKKGVDKV) are disordered. Positions 50 to 63 (GEVKDAVKKGVDKV) are enriched in basic and acidic residues.

The protein belongs to the UPF0337 (CsbD) family.

This chain is UPF0337 protein PSPTO_1596, found in Pseudomonas syringae pv. tomato (strain ATCC BAA-871 / DC3000).